Consider the following 365-residue polypeptide: Ribosomal RNA large subunit methyltransferase M (365 aa).

S-adenosyl-L-methionine is bound by residues serine 193, 226–229, aspartate 245, aspartate 265, and aspartate 282; that span reads CPGG. The active-site Proton acceptor is lysine 311.

It belongs to the class I-like SAM-binding methyltransferase superfamily. RNA methyltransferase RlmE family. RlmM subfamily. In terms of assembly, monomer.

The protein localises to the cytoplasm. It carries out the reaction cytidine(2498) in 23S rRNA + S-adenosyl-L-methionine = 2'-O-methylcytidine(2498) in 23S rRNA + S-adenosyl-L-homocysteine + H(+). Its function is as follows. Catalyzes the 2'-O-methylation at nucleotide C2498 in 23S rRNA. The sequence is that of Ribosomal RNA large subunit methyltransferase M from Alteromonas mediterranea (strain DSM 17117 / CIP 110805 / LMG 28347 / Deep ecotype).